The chain runs to 182 residues: ATP synthase subunit delta (182 aa).

The protein belongs to the ATPase delta chain family. F-type ATPases have 2 components, F(1) - the catalytic core - and F(0) - the membrane proton channel. F(1) has five subunits: alpha(3), beta(3), gamma(1), delta(1), epsilon(1). F(0) has three main subunits: a(1), b(2) and c(10-14). The alpha and beta chains form an alternating ring which encloses part of the gamma chain. F(1) is attached to F(0) by a central stalk formed by the gamma and epsilon chains, while a peripheral stalk is formed by the delta and b chains.

It localises to the cell inner membrane. In terms of biological role, f(1)F(0) ATP synthase produces ATP from ADP in the presence of a proton or sodium gradient. F-type ATPases consist of two structural domains, F(1) containing the extramembraneous catalytic core and F(0) containing the membrane proton channel, linked together by a central stalk and a peripheral stalk. During catalysis, ATP synthesis in the catalytic domain of F(1) is coupled via a rotary mechanism of the central stalk subunits to proton translocation. This protein is part of the stalk that links CF(0) to CF(1). It either transmits conformational changes from CF(0) to CF(1) or is implicated in proton conduction. The polypeptide is ATP synthase subunit delta (Hydrogenobaculum sp. (strain Y04AAS1)).